A 105-amino-acid chain; its full sequence is Transcription factor S (105 aa).

C5, C8, C21, C24, C66, C69, C94, and C97 together coordinate Zn(2+). A C4-type zinc finger spans residues 5–24 (CPKCNNIMLPKNGRLKCTVC). The segment at 62–102 (TRIECPSCGNMEASWWLQQTRCADEPETRFYKCKKCGHTWR) adopts a TFIIS-type zinc-finger fold.

This sequence belongs to the archaeal RpoM/eukaryotic RPA12/RPB9/RPC11 RNA polymerase family.

Its function is as follows. Induces RNA cleavage activity in the RNA polymerase. In its presence, the cleavage activity of the RNA polymerase truncates the RNA back to position +15 in a stepwise manner by releasing mainly dinucleotides from the 3'-end of the nascent RNA. The truncated RNAs are able to continue elongation. Involved in transcriptional proofreading and fidelity. Misincorporation of nucleotides during elongation of transcription leads to arrested elongation complexes which are rescued by TFS-promoted removal of a dinucleotide from the 3'-end. TFS is able to induce a cleavage resynthesis cycle in stalled elongation complexes (resulting from the next missing nucleotide or a reduced incorporation rate of a wrong nucleotide) preventing misincorporation and enabling proofreading in a post-incorporation manner. Pausing of elongation complexes is the main determinant of TFS-induced RNA cleavage. The protein is Transcription factor S of Methanothermococcus thermolithotrophicus (Methanococcus thermolithotrophicus).